We begin with the raw amino-acid sequence, 97 residues long: Peptide YY (97 aa).

Residues 1-28 form the signal peptide; the sequence is MVFVRRPWPALTTVLLALLVCLGALVDA. Ser41 bears the Phosphoserine mark. Tyr64 is modified (tyrosine amide). Positions 65–97 are disordered; that stretch reads GKRDGPDTLLSKTFFPDGEDRPVRSRSEGPDLW. Residues 68–97 constitute a propeptide that is removed on maturation; it reads DGPDTLLSKTFFPDGEDRPVRSRSEGPDLW. Basic and acidic residues predominate over residues 82–97; the sequence is GEDRPVRSRSEGPDLW.

Belongs to the NPY family. In terms of processing, the peptide YY form is cleaved at Pro-30 by the prolyl endopeptidase FAP (seprase) activity (in vitro) to generate peptide YY(3-36).

Its subcellular location is the secreted. This gut peptide inhibits exocrine pancreatic secretion, has a vasoconstrictory action and inhibitis jejunal and colonic mobility. The protein is Peptide YY (PYY) of Homo sapiens (Human).